Consider the following 188-residue polypeptide: Adenylate kinase (188 aa).

Gly10–Thr15 contacts ATP. Positions Ser30 to Val59 are NMP. AMP-binding positions include Thr31, Arg36, Asn57 to Val59, Gly85 to Arg88, and Gln92. The LID stretch occupies residues Lys126–Asp136. Arg127 lines the ATP pocket. Residues Arg133 and Arg144 each contribute to the AMP site. Position 172 (Gly172) interacts with ATP.

This sequence belongs to the adenylate kinase family. As to quaternary structure, monomer.

The protein localises to the cytoplasm. The enzyme catalyses AMP + ATP = 2 ADP. It functions in the pathway purine metabolism; AMP biosynthesis via salvage pathway; AMP from ADP: step 1/1. Catalyzes the reversible transfer of the terminal phosphate group between ATP and AMP. Plays an important role in cellular energy homeostasis and in adenine nucleotide metabolism. The sequence is that of Adenylate kinase from Maricaulis maris (strain MCS10) (Caulobacter maris).